A 191-amino-acid chain; its full sequence is 3-isopropylmalate dehydratase small subunit (191 aa).

This sequence belongs to the LeuD family. LeuD type 1 subfamily. Heterodimer of LeuC and LeuD.

The catalysed reaction is (2R,3S)-3-isopropylmalate = (2S)-2-isopropylmalate. It functions in the pathway amino-acid biosynthesis; L-leucine biosynthesis; L-leucine from 3-methyl-2-oxobutanoate: step 2/4. Its function is as follows. Catalyzes the isomerization between 2-isopropylmalate and 3-isopropylmalate, via the formation of 2-isopropylmaleate. The chain is 3-isopropylmalate dehydratase small subunit from Staphylococcus haemolyticus (strain JCSC1435).